A 273-amino-acid polypeptide reads, in one-letter code: MENRTNFFHLHLISDSTGETLISAGRAASAQFRSAQPIEHVYPLIRNRKQLLPVLQAIDDAPGIVLYTIVDRELASLIDERCTEMGVASVNVLEPVMNAFQIYLGAPSRRRVGAQHVMNAGYFARIEALNFTMDHDDGQMPDDYNDADVVIIGISRTSKTPTSIYLANRGIKTANIPIVYGVPLPEGLLVATKPLIVCLIATTDRISQVRENRILGATQGFDREHYTDRAAISEELKYARSLCARHNWPLIDVTRRSIEETAAAIVALRPKLR.

ADP is bound at residue 153–160 (GISRTSKT).

It belongs to the pyruvate, phosphate/water dikinase regulatory protein family. PDRP subfamily.

It catalyses the reaction N(tele)-phospho-L-histidyl/L-threonyl-[pyruvate, phosphate dikinase] + ADP = N(tele)-phospho-L-histidyl/O-phospho-L-threonyl-[pyruvate, phosphate dikinase] + AMP + H(+). The catalysed reaction is N(tele)-phospho-L-histidyl/O-phospho-L-threonyl-[pyruvate, phosphate dikinase] + phosphate + H(+) = N(tele)-phospho-L-histidyl/L-threonyl-[pyruvate, phosphate dikinase] + diphosphate. Bifunctional serine/threonine kinase and phosphorylase involved in the regulation of the pyruvate, phosphate dikinase (PPDK) by catalyzing its phosphorylation/dephosphorylation. This Rhizobium etli (strain CIAT 652) protein is Putative pyruvate, phosphate dikinase regulatory protein.